The primary structure comprises 83 residues: High-potential iron-sulfur protein (83 aa).

[4Fe-4S] cluster contacts are provided by Cys-43, Cys-46, Cys-61, and Cys-75.

Belongs to the high-potential iron-sulfur protein (HiPIP) family. Homodimer.

The protein localises to the periplasm. Its function is as follows. Specific class of high-redox-potential 4Fe-4S ferredoxins. Functions in anaerobic electron transport in most purple and in some other photosynthetic bacteria and in at least one genus (Paracoccus) of halophilic, denitrifying bacteria. The sequence is that of High-potential iron-sulfur protein from Thiocystis violacea.